The sequence spans 412 residues: Serine--tRNA ligase (412 aa).

An L-serine-binding site is contributed by 228–230; the sequence is TAE. 259 to 261 contributes to the ATP binding site; it reads RKE. Glu-282 serves as a coordination point for L-serine. An ATP-binding site is contributed by 346–349; the sequence is EISS. Ser-380 is a binding site for L-serine.

This sequence belongs to the class-II aminoacyl-tRNA synthetase family. Type-1 seryl-tRNA synthetase subfamily. As to quaternary structure, homodimer. The tRNA molecule binds across the dimer.

Its subcellular location is the cytoplasm. The catalysed reaction is tRNA(Ser) + L-serine + ATP = L-seryl-tRNA(Ser) + AMP + diphosphate + H(+). It carries out the reaction tRNA(Sec) + L-serine + ATP = L-seryl-tRNA(Sec) + AMP + diphosphate + H(+). It participates in aminoacyl-tRNA biosynthesis; selenocysteinyl-tRNA(Sec) biosynthesis; L-seryl-tRNA(Sec) from L-serine and tRNA(Sec): step 1/1. Its function is as follows. Catalyzes the attachment of serine to tRNA(Ser). Is also able to aminoacylate tRNA(Sec) with serine, to form the misacylated tRNA L-seryl-tRNA(Sec), which will be further converted into selenocysteinyl-tRNA(Sec). The sequence is that of Serine--tRNA ligase from Aliarcobacter butzleri (strain RM4018) (Arcobacter butzleri).